The following is a 426-amino-acid chain: Glutamate-1-semialdehyde 2,1-aminomutase (426 aa).

An N6-(pyridoxal phosphate)lysine modification is found at lysine 265.

The protein belongs to the class-III pyridoxal-phosphate-dependent aminotransferase family. HemL subfamily. Homodimer. Pyridoxal 5'-phosphate serves as cofactor.

It is found in the cytoplasm. It carries out the reaction (S)-4-amino-5-oxopentanoate = 5-aminolevulinate. The protein operates within porphyrin-containing compound metabolism; protoporphyrin-IX biosynthesis; 5-aminolevulinate from L-glutamyl-tRNA(Glu): step 2/2. The chain is Glutamate-1-semialdehyde 2,1-aminomutase from Yersinia pestis bv. Antiqua (strain Antiqua).